The sequence spans 95 residues: Small integral membrane protein 18 (95 aa).

A helical membrane pass occupies residues 35–55 (CFVILLLFIFTVVSLVVLAFL).

It localises to the membrane. This is Small integral membrane protein 18 (SMIM18) from Homo sapiens (Human).